The primary structure comprises 405 residues: Eukaryotic translation initiation factor 5 (405 aa).

27-34 (GRGNGIKT) contacts GTP. Residues 143 to 202 (NPPDSVSGSKKKKKAATASANVRGGGLSISDIAQGKSQNAPSDGTGSSTPQHHDEDEDEL) are disordered. A phosphoserine mark is found at Ser-170 and Ser-172. The segment covering 177 to 192 (GKSQNAPSDGTGSSTP) has biased composition (polar residues). Phosphothreonine is present on Thr-191. Ser-228 is subject to Phosphoserine. A W2 domain is found at 241-402 (VNSELTQLDE…ETAESDDDEE (162 aa)). The residue at position 317 (Thr-317) is a Phosphothreonine. The residue at position 397 (Ser-397) is a Phosphoserine.

This sequence belongs to the eIF-2-beta/eIF-5 family. As to quaternary structure, monomer. The factors eIF-1, eIF-2, eIF-3, TIF5/eIF-5 and methionyl-tRNAi form a multifactor complex (MFC) that may bind to the 40S ribosome. TIF32, NIP1 and TIF5/eIF-5 comprise a minimal 40S-ribosome-binding unit. Interacts with NIP1. Interacts with SUI3.

In terms of biological role, catalyzes the hydrolysis of GTP bound to the 40S ribosomal initiation complex (40S.mRNA.Met-tRNA[F].eIF-2.GTP) with the subsequent joining of a 60S ribosomal subunit resulting in the release of eIF-2 and the guanine nucleotide. The subsequent joining of a 60S ribosomal subunit results in the formation of a functional 80S initiation complex (80S.mRNA.Met-tRNA[F]). eIF-5 is essential for cell viability. The protein is Eukaryotic translation initiation factor 5 (TIF5) of Saccharomyces cerevisiae (strain ATCC 204508 / S288c) (Baker's yeast).